The chain runs to 936 residues: DNA topoisomerase 1 (936 aa).

The 125-residue stretch at 15–139 (RRLVIVESPT…VKRMVFHEIT (125 aa)) folds into the Toprim domain. Mg(2+) contacts are provided by Glu-21 and Asp-108. Residues 154–611 (DIALVDAQET…FYFGGEHGVE (458 aa)) form the Topo IA-type catalytic domain. The interval 188-193 (SAGRVQ) is interaction with DNA. Tyr-339 (O-(5'-phospho-DNA)-tyrosine intermediate) is an active-site residue. Disordered stretches follow at residues 661 to 688 (LERM…LTPD), 732 to 767 (VLPE…SLFR), 841 to 884 (KRRG…ETNA), and 903 to 936 (LLAD…AKKA). A compositionally biased stretch (basic residues) spans 910–936 (RGPVKKKAPAKKAAKKAPAKKAAAKKA).

Belongs to the type IA topoisomerase family. Monomer. It depends on Mg(2+) as a cofactor.

It catalyses the reaction ATP-independent breakage of single-stranded DNA, followed by passage and rejoining.. Functionally, releases the supercoiling and torsional tension of DNA, which is introduced during the DNA replication and transcription, by transiently cleaving and rejoining one strand of the DNA duplex. Introduces a single-strand break via transesterification at a target site in duplex DNA. The scissile phosphodiester is attacked by the catalytic tyrosine of the enzyme, resulting in the formation of a DNA-(5'-phosphotyrosyl)-enzyme intermediate and the expulsion of a 3'-OH DNA strand. The free DNA strand then undergoes passage around the unbroken strand, thus removing DNA supercoils. Finally, in the religation step, the DNA 3'-OH attacks the covalent intermediate to expel the active-site tyrosine and restore the DNA phosphodiester backbone. Its function is as follows. Relaxes negatively (but not positively) supercoiled DNA, concatanates and knots circular ssDNA at 52 but not 37 degrees Celsius. Preferentially nicks supercoiled DNA at C(G/T)CTT, cutting between the TT residues, binds ss and dsDNA with the recognition site. In Mycolicibacterium smegmatis (strain ATCC 700084 / mc(2)155) (Mycobacterium smegmatis), this protein is DNA topoisomerase 1.